Reading from the N-terminus, the 115-residue chain is Protein translation factor SUI1 homolog (115 aa).

This sequence belongs to the SUI1 family. As to expression, expressed in all tissues examined.

In terms of biological role, probably involved in translation. This chain is Protein translation factor SUI1 homolog (GOS2), found in Oryza sativa subsp. indica (Rice).